Consider the following 717-residue polypeptide: Segment polarity protein dishevelled homolog DVL-3 (717 aa).

One can recognise a DIX domain in the interval Met-1 to Asp-82. The tract at residues Gly-89 to Ser-235 is disordered. The span at His-118 to Asn-127 shows a compositional bias: polar residues. Residues Ala-140–Thr-155 show a composition bias toward basic and acidic residues. Over residues Glu-173 to Phe-189 the composition is skewed to low complexity. A compositionally biased stretch (polar residues) spans Arg-199–Ser-210. Basic residues predominate over residues Leu-212 to Lys-224. The PDZ domain occupies Thr-248–Ala-333. Residues Ser-421 to Asp-495 form the DEP domain. The segment at Pro-552 to Ile-653 is disordered. Residues Gly-564–Ser-579 are compositionally biased toward low complexity. Composition is skewed to basic and acidic residues over residues Ser-580–Asp-593 and Glu-602–Ser-618. Residues His-629–His-645 show a composition bias toward basic residues.

This sequence belongs to the DSH family. Expressed throughout the epidermis.

The protein localises to the cytoplasm. Its function is as follows. Involved in the signal transduction pathway mediated by multiple Wnt genes. Required during ciliogenesis for the docking of basal bodies to the apical plasma membrane. The chain is Segment polarity protein dishevelled homolog DVL-3 from Xenopus laevis (African clawed frog).